A 35-amino-acid polypeptide reads, in one-letter code: Photosystem II reaction center protein M (35 aa).

Residues 7–27 (GLLATILVILVPSIFLVILYV) traverse the membrane as a helical segment.

It belongs to the PsbM family. PSII is composed of 1 copy each of membrane proteins PsbA, PsbB, PsbC, PsbD, PsbE, PsbF, PsbH, PsbI, PsbJ, PsbK, PsbL, PsbM, PsbT, PsbX, PsbY, PsbZ, Psb30/Ycf12, peripheral proteins PsbO, CyanoQ (PsbQ), PsbU, PsbV and a large number of cofactors. It forms dimeric complexes.

It localises to the cellular thylakoid membrane. One of the components of the core complex of photosystem II (PSII). PSII is a light-driven water:plastoquinone oxidoreductase that uses light energy to abstract electrons from H(2)O, generating O(2) and a proton gradient subsequently used for ATP formation. It consists of a core antenna complex that captures photons, and an electron transfer chain that converts photonic excitation into a charge separation. This subunit is found at the monomer-monomer interface. This Synechococcus sp. (strain JA-3-3Ab) (Cyanobacteria bacterium Yellowstone A-Prime) protein is Photosystem II reaction center protein M.